The following is a 432-amino-acid chain: Metacaspase-1 (432 aa).

Composition is skewed to low complexity over residues 1–14 (MYPG…NNAG) and 29–59 (QQYG…SQQY). A disordered region spans residues 1–70 (MYPGSGRYTY…PPPGPPPMAY (70 aa)). The segment covering 60–70 (APPPGPPPMAY) has biased composition (pro residues). Catalysis depends on residues H220 and C276.

The protein belongs to the peptidase C14B family.

The protein localises to the cytoplasm. The protein resides in the nucleus. Functionally, mediates cell death (apoptosis) triggered by oxygen stress, salt stress or chronological aging. Regulated cell death can prevent a release of toxic cellular components, thus avoiding necrotic collapse of the colony, and can also provide nutrients for healthy cells. Therefore, regulated cell death in yeast colonies can be as important for their development as are apoptosis and related processes that occur within metazoa. This chain is Metacaspase-1 (MCA1), found in Saccharomyces cerevisiae (strain YJM789) (Baker's yeast).